Consider the following 329-residue polypeptide: Probable ABC transporter permease protein MG188 homolog (329 aa).

A run of 6 helical transmembrane segments spans residues 30–50, 96–116, 128–148, 176–196, 234–254, and 283–303; these read FLLF…PFFL, IISL…IVFV, VFFL…IYIL, ALWG…VLVI, LIFL…ISLF, and NFAG…GLVL. The ABC transmembrane type-1 domain maps to 88–303; the sequence is LRNSFLYSII…ILGVCYGLVL (216 aa).

The protein belongs to the binding-protein-dependent transport system permease family. MalFG subfamily.

The protein localises to the cell membrane. Its function is as follows. Probably part of a binding-protein-dependent transport system. Probably responsible for the translocation of the substrate across the membrane. This Mycoplasma pneumoniae (strain ATCC 29342 / M129 / Subtype 1) (Mycoplasmoides pneumoniae) protein is Probable ABC transporter permease protein MG188 homolog.